The primary structure comprises 533 residues: (E)-beta-farnesene synthase (533 aa).

Aspartate 286, aspartate 290, asparagine 430, serine 434, and glutamate 438 together coordinate Mg(2+). The DDXXD motif signature appears at 286–290 (DDMMD).

The protein belongs to the terpene synthase family. Mg(2+) serves as cofactor. Requires Co(2+) as cofactor. The cofactor is Mn(2+).

The protein localises to the cytoplasm. It catalyses the reaction (2E,6E)-farnesyl diphosphate = (E)-beta-farnesene + diphosphate. It functions in the pathway secondary metabolite biosynthesis; terpenoid biosynthesis. Its function is as follows. Sesquiterpene cyclase catalyzing the production of sixfold more beta-farnesene than alpha-bergamotene from farnesyl diphosphate. Involved in indirect defense by producing volatile signals attracting natural enemies of herbivores. This chain is (E)-beta-farnesene synthase, found in Zea diploperennis (Diploperennial teosinte).